The chain runs to 344 residues: Cell division protein ZipA (344 aa).

At 1 to 6 the chain is on the periplasmic side; it reads MEDLQL. Residues 7 to 27 form a helical membrane-spanning segment; that stretch reads VLFVLGAIAIVAVLVHGFWSI. The Cytoplasmic portion of the chain corresponds to 28–344; it reads RRQQPKSLKD…DYLHRIRANA (317 aa). Disordered stretches follow at residues 75-94 and 108-139; these read VRKA…PYLK and QFKQ…ASRQ.

This sequence belongs to the ZipA family. As to quaternary structure, interacts with FtsZ via their C-terminal domains.

It localises to the cell inner membrane. Functionally, essential cell division protein that stabilizes the FtsZ protofilaments by cross-linking them and that serves as a cytoplasmic membrane anchor for the Z ring. Also required for the recruitment to the septal ring of downstream cell division proteins. This is Cell division protein ZipA from Shewanella oneidensis (strain ATCC 700550 / JCM 31522 / CIP 106686 / LMG 19005 / NCIMB 14063 / MR-1).